Here is a 257-residue protein sequence, read N- to C-terminus: Spindlin-2C (257 aa).

Residues 1–47 (MKTPHKKGAAKEQMGEGVGHHIGSTTIKKKKASQKRQRSRSSSRRSI) form a disordered region. The span at 27 to 43 (IKKKKASQKRQRSRSSS) shows a compositional bias: basic residues. Tudor-like domain stretches follow at residues 48-97 (VGCR…LELH), 127-176 (IGKA…YQLL), and 208-253 (IGKH…YDLV). Histone H3K4me3 and H3R8me2a binding stretches follow at residues Glu136 and 244-246 (DFH).

This sequence belongs to the SPIN/STSY family. Interacts with C11orf84/SPINDOC.

The protein resides in the nucleus. In terms of biological role, may be involved in the regulation of cell cycle progression. Exhibits H3K4me3-binding activity. The protein is Spindlin-2C (Spin2c) of Mus musculus (Mouse).